Reading from the N-terminus, the 177-residue chain is Large ribosomal subunit protein uL6 (177 aa).

Belongs to the universal ribosomal protein uL6 family. In terms of assembly, part of the 50S ribosomal subunit.

In terms of biological role, this protein binds to the 23S rRNA, and is important in its secondary structure. It is located near the subunit interface in the base of the L7/L12 stalk, and near the tRNA binding site of the peptidyltransferase center. This is Large ribosomal subunit protein uL6 from Beijerinckia indica subsp. indica (strain ATCC 9039 / DSM 1715 / NCIMB 8712).